The primary structure comprises 276 residues: Protein TabB (276 aa).

It belongs to the transferase hexapeptide repeat family. Requires pyridoxal 5'-phosphate as cofactor.

The sequence is that of Protein TabB (tabB) from Pseudomonas amygdali pv. tabaci (Pseudomonas syringae pv. tabaci).